A 135-amino-acid chain; its full sequence is ATP synthase epsilon chain (135 aa).

A compositionally biased stretch (basic and acidic residues) spans 89–100; that stretch reads SGKAEAELEKAK. A disordered region spans residues 89 to 114; the sequence is SGKAEAELEKAKNQLSQNKDQGNSPE. Residues 101–112 are compositionally biased toward polar residues; sequence NQLSQNKDQGNS.

This sequence belongs to the ATPase epsilon chain family. As to quaternary structure, F-type ATPases have 2 components, CF(1) - the catalytic core - and CF(0) - the membrane proton channel. CF(1) has five subunits: alpha(3), beta(3), gamma(1), delta(1), epsilon(1). CF(0) has three main subunits: a, b and c.

The protein localises to the cellular thylakoid membrane. Functionally, produces ATP from ADP in the presence of a proton gradient across the membrane. The sequence is that of ATP synthase epsilon chain from Prochlorococcus marinus (strain NATL2A).